The sequence spans 252 residues: MLSVKSIPAFNDNYIWLIHNNDNHCVVVDPGDATPVLECIKEHDFILDAILITHHHHDHIGGVPELVRQFPSVNVVGPENEPIPTLTHPVGDGDFVELFDEQFMVLGVPGHTNGHVAYVGDEKLFCGDALFSAGCGRLFEGTAEQMFNSLQKMAALPDETEVYCAHEYTASNLAFALAVEPDNDYLLRYREKVLHLRAHGKSTIPSTLQREKLINPFLRTSEANVKKSVASKVQDSTEVEIFTALRRWKDEF.

His54, His56, Asp58, His59, His111, Asp128, and His166 together coordinate Zn(2+).

Belongs to the metallo-beta-lactamase superfamily. Glyoxalase II family. In terms of assembly, monomer. The cofactor is Zn(2+).

It catalyses the reaction an S-(2-hydroxyacyl)glutathione + H2O = a 2-hydroxy carboxylate + glutathione + H(+). It participates in secondary metabolite metabolism; methylglyoxal degradation; (R)-lactate from methylglyoxal: step 2/2. Its function is as follows. Thiolesterase that catalyzes the hydrolysis of S-D-lactoyl-glutathione to form glutathione and D-lactic acid. In Aliivibrio fischeri (strain MJ11) (Vibrio fischeri), this protein is Hydroxyacylglutathione hydrolase.